The sequence spans 788 residues: Leucine-rich repeat and fibronectin type-III domain-containing protein 2 (788 aa).

The signal sequence occupies residues 1–20 (METLLGGLLAFGMAFAVVDA). The LRRNT domain maps to 21 to 52 (CPKYCVCQNLSESLGTLCPSKGLLFVPPDIDR). The Extracellular segment spans residues 21–534 (CPKYCVCQNL…MHSQILGGTM (514 aa)). Residue Asn29 is glycosylated (N-linked (GlcNAc...) asparagine). LRR repeat units follow at residues 53-74 (RTVE…DFAN), 77-98 (GLVD…SFLD), 101-122 (SLRS…TLRG), 125-146 (NLQH…AFED), 150-171 (TLED…SVRR), 174-195 (NLHQ…TFAD), and 198-219 (KLAR…PIFA). Residues 242–288 (NPLHCNCELLWLRRLERDDDLETCGSPGSLKGRYFWHIREEEFVCEP) enclose the LRRCT domain. Residues 289-375 (PLITQHTHKL…GEATATVEVS (87 aa)) enclose the Ig-like domain. Cys310 and Cys359 are oxidised to a cystine. N-linked (GlcNAc...) asparagine glycans are attached at residues Asn332, Asn341, and Asn384. The segment at 383 to 423 (SNSTSRMAPPKSRLSDITGSSKTSRGGGGSGAGEPPKSTPE) is disordered. Residues 422 to 518 (PERAVLVSDV…GCAQFFTKAD (97 aa)) enclose the Fibronectin type-III domain. A helical transmembrane segment spans residues 535-555 (ILVIGGIIVATLLVFIVILMV). At 556 to 788 (RYKVCNHDTP…SSEWVMESTV (233 aa)) the chain is on the cytoplasmic side. A compositionally biased stretch (low complexity) spans 620–631 (CDSSSSSSLGSG). Disordered regions lie at residues 620–655 (CDSS…PSLD) and 668–711 (SQRK…RSLL). A compositionally biased stretch (pro residues) spans 642-651 (RLPPPAPRPK). The short motif at 785–788 (ESTV) is the PDZ-binding element.

It belongs to the LRFN family. In terms of assembly, forms heteromeric complexes with LRFN1, LRFN3, LRFN4 and LRFN5. Can form homomeric complexes, but not across cell junctions. Interacts with DLG4. Directly interacts with DLG1, DLG2 and DLG3. Directly interacts with 2 NMDA receptor subunits GRIN1 and GRIN2A. Glycosylated. As to expression, predominantly expressed in the brain, with a weak, but broad expression in the cerebral cortex and diencephalic nuclei. Strongly expressed in both the pyramidal layer and the dentate gyrus of the hippocampus. Also detected in other parts of the central nervous system, including the olfactory bulb, pons, cerebellum, and medulla oblongata, as well as in the peripheral nervous system, such as the ganglia of cranial nerves and the dorsal root ganglion during gestation.

It localises to the membrane. Its subcellular location is the synapse. The protein resides in the postsynaptic cell membrane. In terms of biological role, promotes neurite outgrowth in hippocampal neurons. Enhances the cell surface expression of 2 NMDA receptor subunits GRIN1 and GRIN2A. May play a role in redistributing DLG4 to the cell periphery. The sequence is that of Leucine-rich repeat and fibronectin type-III domain-containing protein 2 (Lrfn2) from Mus musculus (Mouse).